The chain runs to 164 residues: MKSVITTVVSAADAAGRFPSNSDLESIQGNIQRSAARLEAAEKLAGNHEAVVKEAGDACFAKYAYLKNPGEAGENQEKINKCYRDVDHYMRLVNYDLVVGGTGPLDEWGIAGAREVYRTLNLPTSAYVASIAYTRDRLCVPRDMSAQAGVEFSAYLDYLINALS.

(2R,3E)-phycoerythrobilin is bound by residues Cys82 and Cys139.

The protein belongs to the phycobiliprotein family. As to quaternary structure, heteromer of 6 alpha, 6 beta and one gamma chain. Contains two covalently linked bilin chromophores.

It is found in the plastid. The protein localises to the chloroplast thylakoid membrane. Its function is as follows. Light-harvesting photosynthetic bile pigment-protein from the phycobiliprotein complex. The sequence is that of B-phycoerythrin alpha chain (cpeA) from Porphyridium purpureum (Red alga).